The following is a 561-amino-acid chain: Carbohydrate sulfotransferase 15 (561 aa).

Residues 1 to 80 are Cytoplasmic-facing; sequence MRHCINCCVQ…FLRFRKGKRC (80 aa). A helical; Signal-anchor for type II membrane protein transmembrane segment spans residues 81 to 101; sequence SLVFGLIIMTLVMASYILSGA. The Lumenal segment spans residues 102-561; the sequence is HQELLISSPF…DDEAFAWKTT (460 aa). 263–267 contacts 3'-phosphoadenylyl sulfate; it reads KCGTT. Residue Asn-364 is glycosylated (N-linked (GlcNAc...) asparagine). Residues Arg-392 and Ser-400 each contribute to the 3'-phosphoadenylyl sulfate site.

This sequence belongs to the sulfotransferase 1 family. Homodimer; disulfide-linked (Potential). The relevance of homodimerization is however unsure. May interact with phosphorylated proteins in resting B-cells, including HCK. It depends on a divalent metal cation as a cofactor. Requires glutathione as cofactor. Glycosylated.

It is found in the golgi apparatus membrane. It catalyses the reaction dermatan 4'-sulfate + n 3'-phosphoadenylyl sulfate = dermatan 4',6'-bissulfate + n adenosine 3',5'-bisphosphate + n H(+). The enzyme catalyses chondroitin 4'-sulfate + n 3'-phosphoadenylyl sulfate = chondroitin 4',6'-bissulfate + n adenosine 3',5'-bisphosphate + n H(+). With respect to regulation, inhibited by phenyl beta-GalNAc(4,6-SO(4)). Sulfotransferase that transfers sulfate from 3'-phosphoadenosine 5'-phosphosulfate (PAPS) to the C-6 hydroxyl group of the GalNAc 4-sulfate residue of chondroitin sulfate A and forms chondroitin sulfate E containing GlcA-GalNAc(4,6-SO(4)) repeating units. It also transfers sulfate to a unique non-reducing terminal sequence, GalNAc(4SO4)-GlcA(2SO4)-GalNAc(6SO4), to yield a highly sulfated structure similar to the structure found in thrombomodulin chondroitin sulfate. May also act as a B-cell receptor involved in BCR ligation-mediated early activation that mediate regulatory signals key to B-cell development and/or regulation of B-cell-specific RAG expression; however such results are unclear in vivo. This chain is Carbohydrate sulfotransferase 15 (Chst15), found in Mus musculus (Mouse).